The chain runs to 301 residues: ADP,ATP carrier protein 1 (301 aa).

Solcar repeat units lie at residues Y8–V100, R113–M203, and T210–L299. 5 helical membrane passes run F10–Q39, L77–F101, W112–F132, V181–K201, and F213–F233. 2 residues coordinate ADP: R82 and K94. R237 serves as a coordination point for ADP. The segment at R237–M242 is important for transport activity. Residues R237–M242 carry the Nucleotide carrier signature motif motif. The chain crosses the membrane as a helical span at residues A276–Y293.

It belongs to the mitochondrial carrier (TC 2.A.29) family. Monomer.

Its subcellular location is the mitochondrion inner membrane. The enzyme catalyses ADP(in) + ATP(out) = ADP(out) + ATP(in). The matrix-open state (m-state) is inhibited by the membrane-permeable bongkrekic acid (BKA). The cytoplasmic-open state (c-state) is inhibited by the membrane-impermeable toxic inhibitor carboxyatractyloside (CATR). In terms of biological role, ADP:ATP antiporter that mediates import of ADP into the mitochondrial matrix for ATP synthesis, and export of ATP out to fuel the cell. Cycles between the cytoplasmic-open state (c-state) and the matrix-open state (m-state): operates by the alternating access mechanism with a single substrate-binding site intermittently exposed to either the cytosolic (c-state) or matrix (m-state) side of the inner mitochondrial membrane. The protein is ADP,ATP carrier protein 1 of Anopheles gambiae (African malaria mosquito).